We begin with the raw amino-acid sequence, 391 residues long: Coproporphyrin III ferrochelatase (391 aa).

The Fe-coproporphyrin III site is built by serine 79 and tyrosine 148. The Fe(2+) site is built by histidine 211 and glutamate 305.

The protein belongs to the ferrochelatase family.

The protein resides in the cytoplasm. It carries out the reaction Fe-coproporphyrin III + 2 H(+) = coproporphyrin III + Fe(2+). Its pathway is porphyrin-containing compound metabolism; protoheme biosynthesis. In terms of biological role, involved in coproporphyrin-dependent heme b biosynthesis. Catalyzes the insertion of ferrous iron into coproporphyrin III to form Fe-coproporphyrin III. The sequence is that of Coproporphyrin III ferrochelatase from Tropheryma whipplei (strain TW08/27) (Whipple's bacillus).